Consider the following 189-residue polypeptide: Leucine repeat adapter protein 25 (189 aa).

Serine 28 is modified (phosphoserine). The tract at residues 54–82 (ELSRAARAPDGPRHAAGSANSGSAAGPRR) is disordered. A compositionally biased stretch (low complexity) spans 68–79 (AAGSANSGSAAG). The stretch at 86–114 (LDSALAALRKEMVGLRQLDMSLLCQLWGL) is one LRR repeat. The segment at 136–175 (SSLHSDSSYPPDAGLSDDEEPPDASLPPDPPPLTVPQTHN) is disordered. The span at 159–169 (ASLPPDPPPLT) shows a compositional bias: pro residues. Serine 188 bears the Phosphoserine mark.

The protein belongs to the FAM89 family. As to quaternary structure, interacts with SKI. Interacts (via LRR repeat) with CDC42BPA (via AGC-kinase C-terminal domain), CDC42BPB (via AGC-kinase C-terminal domain) and LIMK1 (via LIM zinc-binding domains). Forms a tripartite complex with CDC42BPA, CDC42BPB and LIMK1. In terms of assembly, (Microbial infection) Interacts with mouse mammary tumor virus (MMTV) envelope glycoprotein gp70. In terms of tissue distribution, widely expressed. Expressed in the early postnatal brain.

The protein localises to the cytoplasm. Its subcellular location is the cell projection. The protein resides in the lamellipodium. It is found in the cell surface. In terms of biological role, negatively regulates TGF-beta-induced signaling; in cooperation with SKI prevents the translocation of SMAD2 from the nucleus to the cytoplasm in response to TGF-beta. Acts as an adapter that mediates the specific recognition of LIMK1 by CDC42BPA and CDC42BPB in the lamellipodia. LRAP25-mediated CDC42BPA/CDC42BPB targeting to LIMK1 and the lamellipodium results in LIMK1 activation and the subsequent phosphorylation of CFL1 which is important for lamellipodial F-actin regulation. Functionally, (Microbial infection) May be a receptor for mouse mammary tumor virus (MMTV). The protein is Leucine repeat adapter protein 25 of Mus musculus (Mouse).